The chain runs to 236 residues: ATP synthase subunit a (236 aa).

The next 5 helical transmembrane spans lie at 18–38 (SNLL…VLCT), 80–100 (VTLL…AIVI), 112–132 (DPAI…YYGI), 179–199 (ILLS…IGAA), and 200–220 (IPML…AFIF).

The protein belongs to the ATPase A chain family. In terms of assembly, F-type ATPases have 2 components, CF(1) - the catalytic core - and CF(0) - the membrane proton channel. CF(1) has five subunits: alpha(3), beta(3), gamma(1), delta(1), epsilon(1). CF(0) has three main subunits: a(1), b(2) and c(9-12). The alpha and beta chains form an alternating ring which encloses part of the gamma chain. CF(1) is attached to CF(0) by a central stalk formed by the gamma and epsilon chains, while a peripheral stalk is formed by the delta and b chains.

It localises to the cell membrane. In terms of biological role, key component of the proton channel; it plays a direct role in the translocation of protons across the membrane. The chain is ATP synthase subunit a from Priestia megaterium (strain ATCC 12872 / QMB1551) (Bacillus megaterium).